We begin with the raw amino-acid sequence, 637 residues long: Chaperone protein DnaK (637 aa).

Thr198 is modified (phosphothreonine; by autocatalysis). Low complexity predominate over residues 601-615; that stretch reads AQQKAQAEQAGADAG. The tract at residues 601 to 637 is disordered; sequence AQQKAQAEQAGADAGEQPKQDDDVVDAEFEEVKEDKK. The span at 623–637 shows a compositional bias: acidic residues; it reads DVVDAEFEEVKEDKK.

It belongs to the heat shock protein 70 family.

In terms of biological role, acts as a chaperone. The chain is Chaperone protein DnaK from Vibrio atlanticus (strain LGP32) (Vibrio splendidus (strain Mel32)).